We begin with the raw amino-acid sequence, 126 residues long: Histone H2B type 1-H (126 aa).

Positions Met-1–Lys-12 are enriched in low complexity. Residues Met-1–Glu-36 form a disordered region. Pro-2 carries the post-translational modification N-acetylproline. ADP-ribosyl glutamic acid is present on Glu-3. At Lys-6 the chain carries N6-(2-hydroxyisobutyryl)lysine; alternate. Lys-6 is modified (N6-(beta-hydroxybutyryl)lysine; alternate). The residue at position 6 (Lys-6) is an N6-acetyllysine; alternate. An N6-butyryllysine; alternate modification is found at Lys-6. Lys-6 bears the N6-crotonyllysine; alternate mark. The residue at position 6 (Lys-6) is an N6-lactoyllysine; alternate. Lys-6 participates in a covalent cross-link: Glycyl lysine isopeptide (Lys-Gly) (interchain with G-Cter in SUMO2); alternate. Ser-7 bears the ADP-ribosylserine mark. Residue Lys-12 is modified to N6-(beta-hydroxybutyryl)lysine; alternate. 2 positions are modified to N6-acetyllysine; alternate: Lys-12 and Lys-13. 2 positions are modified to N6-crotonyllysine; alternate: Lys-12 and Lys-13. At Lys-12 the chain carries N6-lactoyllysine; alternate. Lys-13 bears the N6-(2-hydroxyisobutyryl)lysine; alternate mark. Ser-15 carries the phosphoserine; by STK4/MST1 modification. N6-acetyllysine; alternate is present on residues Lys-16, Lys-17, Lys-21, and Lys-24. N6-crotonyllysine; alternate is present on residues Lys-16, Lys-17, Lys-21, and Lys-24. Residues Lys-16, Lys-17, Lys-21, and Lys-24 each carry the N6-lactoyllysine; alternate modification. Lys-17 carries the N6-glutaryllysine; alternate modification. 2 positions are modified to N6-(2-hydroxyisobutyryl)lysine; alternate: Lys-21 and Lys-24. At Lys-21 the chain carries N6-(beta-hydroxybutyryl)lysine; alternate. Position 21 is an N6-butyryllysine; alternate (Lys-21). Lys-21 is covalently cross-linked (Glycyl lysine isopeptide (Lys-Gly) (interchain with G-Cter in SUMO2); alternate). N6-(2-hydroxyisobutyryl)lysine is present on Lys-25. Lys-35 bears the N6-(2-hydroxyisobutyryl)lysine; alternate mark. An N6-(beta-hydroxybutyryl)lysine; alternate modification is found at Lys-35. Lys-35 is modified (N6-crotonyllysine; alternate). Lys-35 bears the N6-glutaryllysine; alternate mark. Lys-35 is modified (N6-succinyllysine; alternate). Lys-35 participates in a covalent cross-link: Glycyl lysine isopeptide (Lys-Gly) (interchain with G-Cter in ubiquitin); alternate. Glu-36 is modified (polyADP-ribosyl glutamic acid). Ser-37 bears the Phosphoserine; by AMPK mark. N6-(2-hydroxyisobutyryl)lysine; alternate occurs at positions 44, 47, and 58. Lys-44 is modified (N6-lactoyllysine; alternate). Residues Lys-44 and Lys-47 each carry the N6-glutaryllysine; alternate modification. Lys-47 carries the N6-methyllysine; alternate modification. Lys-58 is modified (N6,N6-dimethyllysine; alternate). Arg-80 carries the post-translational modification Dimethylated arginine. The residue at position 86 (Lys-86) is an N6-(2-hydroxyisobutyryl)lysine; alternate. Position 86 is an N6-acetyllysine; alternate (Lys-86). At Lys-86 the chain carries N6-lactoyllysine; alternate. N6,N6,N6-trimethyllysine; alternate is present on Lys-86. Omega-N-methylarginine occurs at positions 87 and 93. Lys-109 is subject to N6-(2-hydroxyisobutyryl)lysine; alternate. Lys-109 is subject to N6-(beta-hydroxybutyryl)lysine; alternate. Lys-109 carries the N6-lactoyllysine; alternate modification. At Lys-109 the chain carries N6-glutaryllysine; alternate. Lys-109 is modified (N6-methyllysine; alternate). A glycan (O-linked (GlcNAc) serine) is linked at Ser-113. The residue at position 116 (Thr-116) is a Phosphothreonine. 2 positions are modified to N6-(2-hydroxyisobutyryl)lysine; alternate: Lys-117 and Lys-121. N6-(beta-hydroxybutyryl)lysine; alternate is present on Lys-117. Lys-117 and Lys-121 each carry N6-lactoyllysine; alternate. An N6-glutaryllysine; alternate mark is found at Lys-117 and Lys-121. Residues Lys-117 and Lys-121 each carry the N6-succinyllysine; alternate modification. Lys-117 carries the N6-methylated lysine; alternate modification. A Glycyl lysine isopeptide (Lys-Gly) (interchain with G-Cter in ubiquitin); alternate cross-link involves residue Lys-121.

Belongs to the histone H2B family. In terms of assembly, the nucleosome is a histone octamer containing two molecules each of H2A, H2B, H3 and H4 assembled in one H3-H4 heterotetramer and two H2A-H2B heterodimers. The octamer wraps approximately 147 bp of DNA. Post-translationally, monoubiquitination at Lys-35 (H2BK34Ub) by the MSL1/MSL2 dimer is required for histone H3 'Lys-4' (H3K4me) and 'Lys-79' (H3K79me) methylation and transcription activation at specific gene loci, such as HOXA9 and MEIS1 loci. Similarly, monoubiquitination at Lys-121 (H2BK120Ub) by the RNF20/40 complex gives a specific tag for epigenetic transcriptional activation and is also prerequisite for histone H3 'Lys-4' and 'Lys-79' methylation. It also functions cooperatively with the FACT dimer to stimulate elongation by RNA polymerase II. H2BK120Ub also acts as a regulator of mRNA splicing: deubiquitination by USP49 is required for efficient cotranscriptional splicing of a large set of exons. In terms of processing, phosphorylated on Ser-15 (H2BS14ph) by STK4/MST1 during apoptosis; which facilitates apoptotic chromatin condensation. Also phosphorylated on Ser-15 in response to DNA double strand breaks (DSBs), and in correlation with somatic hypermutation and immunoglobulin class-switch recombination. Phosphorylation at Ser-37 (H2BS36ph) by AMPK in response to stress promotes transcription. GlcNAcylation at Ser-113 promotes monoubiquitination of Lys-121. It fluctuates in response to extracellular glucose, and associates with transcribed genes. Post-translationally, ADP-ribosylated by PARP1 or PARP2 on Ser-7 (H2BS6ADPr) in response to DNA damage. H2BS6ADPr promotes recruitment of CHD1L. Mono-ADP-ribosylated on Glu-3 (H2BE2ADPr) by PARP3 in response to single-strand breaks. Poly ADP-ribosylation on Glu-36 (H2BE35ADPr) by PARP1 regulates adipogenesis: it inhibits phosphorylation at Ser-37 (H2BS36ph), thereby blocking expression of pro-adipogenetic genes. In terms of processing, crotonylation (Kcr) is specifically present in male germ cells and marks testis-specific genes in post-meiotic cells, including X-linked genes that escape sex chromosome inactivation in haploid cells. Crotonylation marks active promoters and enhancers and confers resistance to transcriptional repressors. It is also associated with post-meiotically activated genes on autosomes. Hydroxybutyrylation of histones is induced by starvation. Post-translationally, lactylated in macrophages by EP300/P300 by using lactoyl-CoA directly derived from endogenous or exogenous lactate, leading to stimulates gene transcription.

The protein localises to the nucleus. The protein resides in the chromosome. Functionally, core component of nucleosome. Nucleosomes wrap and compact DNA into chromatin, limiting DNA accessibility to the cellular machineries which require DNA as a template. Histones thereby play a central role in transcription regulation, DNA repair, DNA replication and chromosomal stability. DNA accessibility is regulated via a complex set of post-translational modifications of histones, also called histone code, and nucleosome remodeling. This is Histone H2B type 1-H from Mus musculus (Mouse).